We begin with the raw amino-acid sequence, 650 residues long: MGKIIGIDLGTTNSCVAIMEGNSVKVIENSEGARTTPSIIAYMEDGEILVGAPAKRQSVTNPKNTLYAVKRLIGRRFEEKEVQKDIALMPYKIMKADNGDAWIEVRDQKLAPPQISAETLRKMKKTAEDYLGEPVTEAVITVPAYFNDSQRQATKDAGRIAGLEVKRIINEPTAAALAFGLDKAEKGDRKIAVYDLGGGTFDVSIIEIADVDGEMQFEVLSTNGDTFLGGEDFDQRIIDYIIAEFKKEQGVDLSKDVLALQRLKESAEKAKIELSSSQQTEINLPYITADASGPKHLDLKITRAKLEALVEELIERTIEPCRVAIKDAGVKVGEIDDVILVGGMTRMPKVQEKVKEFFGKDPRRDVNPDEAVAVGAAIQGQVLSGDRKDVLLLDVTPLSLGIETLGGVMTKMINKNTTIPTKHAQVYSTADDNQGAVTIKVFQGEREMAAGNKLLGEFNLEGIPPAPRGTPQIEVSFDIDANGILHVGAKDKATGKENRITIKANSGLSEAEIEKMVKDAEANAEEDHKLRELADARNQGDALVHSTKKALTEYGDKLEAAEKEKIEAALKDLEETLKSGSADKAAIEAKIEVVATASQKMGEKMYADMQAAQGAEAAAAGAAGAGATAGGASQQQDDVVDAEFKEVKKD.

At T200 the chain carries Phosphothreonine; by autocatalysis.

Belongs to the heat shock protein 70 family.

In terms of biological role, acts as a chaperone. The protein is Chaperone protein DnaK of Paraburkholderia phytofirmans (strain DSM 17436 / LMG 22146 / PsJN) (Burkholderia phytofirmans).